A 179-amino-acid chain; its full sequence is uncharacterized protein (179 aa).

The protein localises to the virion. This is an uncharacterized protein from Acanthamoeba polyphaga (Amoeba).